A 126-amino-acid polypeptide reads, in one-letter code: Small ribosomal subunit protein uS11 (126 aa).

This sequence belongs to the universal ribosomal protein uS11 family. In terms of assembly, part of the 30S ribosomal subunit. Interacts with proteins S7 and S18. Binds to IF-3.

Located on the platform of the 30S subunit, it bridges several disparate RNA helices of the 16S rRNA. Forms part of the Shine-Dalgarno cleft in the 70S ribosome. This is Small ribosomal subunit protein uS11 from Treponema pallidum (strain Nichols).